A 212-amino-acid polypeptide reads, in one-letter code: ATP phosphoribosyltransferase (212 aa).

The protein belongs to the ATP phosphoribosyltransferase family. Short subfamily. As to quaternary structure, heteromultimer composed of HisG and HisZ subunits.

The protein localises to the cytoplasm. The enzyme catalyses 1-(5-phospho-beta-D-ribosyl)-ATP + diphosphate = 5-phospho-alpha-D-ribose 1-diphosphate + ATP. It participates in amino-acid biosynthesis; L-histidine biosynthesis; L-histidine from 5-phospho-alpha-D-ribose 1-diphosphate: step 1/9. Its function is as follows. Catalyzes the condensation of ATP and 5-phosphoribose 1-diphosphate to form N'-(5'-phosphoribosyl)-ATP (PR-ATP). Has a crucial role in the pathway because the rate of histidine biosynthesis seems to be controlled primarily by regulation of HisG enzymatic activity. This is ATP phosphoribosyltransferase from Clostridium novyi (strain NT).